The following is a 101-amino-acid chain: MKPGEIIAASGEIELNAGQPTVTIEVSNTGDRPVQVGSHYHFFETNAGLSFDRDKVRGMRLDIPAGTAVRFEPGQTREVTLIPLAGKREVYGFRQKVMGPL.

It belongs to the urease beta subunit family. Heterotrimer of UreA (gamma), UreB (beta) and UreC (alpha) subunits. Three heterotrimers associate to form the active enzyme.

Its subcellular location is the cytoplasm. It carries out the reaction urea + 2 H2O + H(+) = hydrogencarbonate + 2 NH4(+). Its pathway is nitrogen metabolism; urea degradation; CO(2) and NH(3) from urea (urease route): step 1/1. This Allorhizobium ampelinum (strain ATCC BAA-846 / DSM 112012 / S4) (Agrobacterium vitis (strain S4)) protein is Urease subunit beta.